Consider the following 155-residue polypeptide: F-box only protein 48 (155 aa).

The interval 1–27 (MHKNSKRNNNLRVSHTEANSVDAEKEK) is disordered. Residues 7–19 (RNNNLRVSHTEAN) are compositionally biased toward polar residues. The region spanning 32 to 79 (NNFFELLPAEITFKIFSQLDIRSLCRASLTCRSWNDTIRNSDSLWKPH) is the F-box domain.

This Homo sapiens (Human) protein is F-box only protein 48 (FBXO48).